The following is a 476-amino-acid chain: Sulfate adenylyltransferase subunit 1 (476 aa).

Positions 17 to 232 (KDLLRLLTAG…LETVHIDSDN (216 aa)) constitute a tr-type G domain. Residues 26-33 (GSVDDGKS) are G1. A GTP-binding site is contributed by 26–33 (GSVDDGKS). Residues 84–88 (GITID) are G2. The tract at residues 105–108 (DTPG) is G3. GTP is bound by residues 105-109 (DTPGH) and 160-163 (NKMD). Residues 160 to 163 (NKMD) are G4. Residues 197 to 199 (SAL) form a G5 region.

The protein belongs to the TRAFAC class translation factor GTPase superfamily. Classic translation factor GTPase family. CysN/NodQ subfamily. Heterodimer composed of CysD, the smaller subunit, and CysN.

It catalyses the reaction sulfate + ATP + H(+) = adenosine 5'-phosphosulfate + diphosphate. It functions in the pathway sulfur metabolism; hydrogen sulfide biosynthesis; sulfite from sulfate: step 1/3. In terms of biological role, with CysD forms the ATP sulfurylase (ATPS) that catalyzes the adenylation of sulfate producing adenosine 5'-phosphosulfate (APS) and diphosphate, the first enzymatic step in sulfur assimilation pathway. APS synthesis involves the formation of a high-energy phosphoric-sulfuric acid anhydride bond driven by GTP hydrolysis by CysN coupled to ATP hydrolysis by CysD. The chain is Sulfate adenylyltransferase subunit 1 from Bacteroides fragilis (strain YCH46).